We begin with the raw amino-acid sequence, 753 residues long: 5-methyltetrahydropteroyltriglutamate--homocysteine methyltransferase (753 aa).

5-methyltetrahydropteroyltri-L-glutamate contacts are provided by residues 17–20 (RELK) and lysine 117. Residues 431–433 (IGS) and glutamate 484 each bind L-homocysteine. Residues 431 to 433 (IGS) and glutamate 484 each bind L-methionine. 5-methyltetrahydropteroyltri-L-glutamate-binding positions include 515–516 (RC) and tryptophan 561. Aspartate 599 serves as a coordination point for L-homocysteine. Aspartate 599 is a binding site for L-methionine. Position 605 (glutamate 605) interacts with 5-methyltetrahydropteroyltri-L-glutamate. Zn(2+) is bound by residues histidine 641, cysteine 643, and glutamate 665. The Proton donor role is filled by histidine 694. Cysteine 726 is a Zn(2+) binding site.

The protein belongs to the vitamin-B12 independent methionine synthase family. Requires Zn(2+) as cofactor.

It carries out the reaction 5-methyltetrahydropteroyltri-L-glutamate + L-homocysteine = tetrahydropteroyltri-L-glutamate + L-methionine. Its pathway is amino-acid biosynthesis; L-methionine biosynthesis via de novo pathway; L-methionine from L-homocysteine (MetE route): step 1/1. Functionally, catalyzes the transfer of a methyl group from 5-methyltetrahydrofolate to homocysteine resulting in methionine formation. The chain is 5-methyltetrahydropteroyltriglutamate--homocysteine methyltransferase from Shigella boydii serotype 18 (strain CDC 3083-94 / BS512).